A 163-amino-acid polypeptide reads, in one-letter code: CDP-archaeol synthase (163 aa).

5 consecutive transmembrane segments (helical) span residues 4-24, 52-72, 75-95, 107-127, and 128-148; these read LLLG…APFI, LLLS…FLGI, IIIG…GAFI, APIL…ISFN, and VNLN…LHMF.

It belongs to the CDP-archaeol synthase family. Requires Mg(2+) as cofactor.

The protein localises to the cell membrane. The enzyme catalyses 2,3-bis-O-(geranylgeranyl)-sn-glycerol 1-phosphate + CTP + H(+) = CDP-2,3-bis-O-(geranylgeranyl)-sn-glycerol + diphosphate. Its pathway is membrane lipid metabolism; glycerophospholipid metabolism. Catalyzes the formation of CDP-2,3-bis-(O-geranylgeranyl)-sn-glycerol (CDP-archaeol) from 2,3-bis-(O-geranylgeranyl)-sn-glycerol 1-phosphate (DGGGP) and CTP. This reaction is the third ether-bond-formation step in the biosynthesis of archaeal membrane lipids. This Sulfolobus acidocaldarius (strain ATCC 33909 / DSM 639 / JCM 8929 / NBRC 15157 / NCIMB 11770) protein is CDP-archaeol synthase.